The following is an 808-amino-acid chain: Sucrose synthase 4 (808 aa).

A GT-B glycosyltransferase region spans residues 277-754 (MVFNVVILSP…GLERIQEKYT (478 aa)).

It belongs to the glycosyltransferase 1 family. Plant sucrose synthase subfamily. In terms of tissue distribution, detected in the whole plant with highest expression in young rosette leaves and roots.

It carries out the reaction an NDP-alpha-D-glucose + D-fructose = a ribonucleoside 5'-diphosphate + sucrose + H(+). Functionally, sucrose-cleaving enzyme that provides UDP-glucose and fructose for various metabolic pathways. The polypeptide is Sucrose synthase 4 (SUS4) (Arabidopsis thaliana (Mouse-ear cress)).